Reading from the N-terminus, the 452-residue chain is Keratin, type I cytoskeletal 15 (452 aa).

The head stretch occupies residues 1–97 (MATTFLQTSS…GGDGGLLSGN (97 aa)). Phosphoserine occurs at positions 15, 16, 28, 33, and 47. The coil 1A stretch occupies residues 98 to 133 (EKVTMQNLNDRLASYLDKVRALEQANTELEVKIRDW). Residues 98–410 (EKVTMQNLND…NLLEGQDAKM (313 aa)) enclose the IF rod domain. Threonine 124 carries the post-translational modification Phosphothreonine. The interval 134–152 (YQKQSPASPDRDYSHYFKT) is linker 1. The tract at residues 153–244 (MEEIRDKILA…KNHEEEMKEF (92 aa)) is coil 1B. The linker 12 stretch occupies residues 245–264 (SSQLAGQVNVEMDAAPGVDL). The coil 2 stretch occupies residues 265 to 406 (TRMLAEMREQ…ATYRNLLEGQ (142 aa)). Lysine 293 participates in a covalent cross-link: Glycyl lysine isopeptide (Lys-Gly) (interchain with G-Cter in SUMO2). Phosphothreonine is present on residues threonine 294 and threonine 316. Residues 407-452 (DAKMAGIGVREGSSGGGGSSSSSSNFHISVEESVDGKVVSSRKREI) are tail. Residues 413–452 (IGVREGSSGGGGSSSSSSNFHISVEESVDGKVVSSRKREI) form a disordered region. A Glycyl lysine isopeptide (Lys-Gly) (interchain with G-Cter in SUMO1); alternate cross-link involves residue lysine 443. Lysine 443 is covalently cross-linked (Glycyl lysine isopeptide (Lys-Gly) (interchain with G-Cter in SUMO2); alternate).

This sequence belongs to the intermediate filament family. In terms of assembly, heterotetramer of two type I and two type II keratins. Forms a heterodimer with KRT14. Interacts with PLEC isoform 1C, when in a heterodimer with KRT14. Interacts with NOD2. As to expression, expressed strongly in the basal cell layer at the tips of rete-like prominences (RLPs) of adult dorsal tongue, outer root sheath (ORS) of hair follicle and skin epidermis (at protein level).

Its function is as follows. In the absence of KRT14, makes a bona fide, but ultrastructurally distinct keratin filament network with KRT5. The protein is Keratin, type I cytoskeletal 15 (Krt15) of Mus musculus (Mouse).